Here is a 197-residue protein sequence, read N- to C-terminus: Glycerol-3-phosphate acyltransferase (197 aa).

Helical transmembrane passes span 7–27 (TLLP…LILT), 55–75 (GLAA…VLIV), 78–98 (VWPG…CFPV), 116–136 (LALA…VLFL), and 157–177 (VLGY…VLYL).

Belongs to the PlsY family. In terms of assembly, probably interacts with PlsX.

It localises to the cell inner membrane. It catalyses the reaction an acyl phosphate + sn-glycerol 3-phosphate = a 1-acyl-sn-glycero-3-phosphate + phosphate. It participates in lipid metabolism; phospholipid metabolism. Its function is as follows. Catalyzes the transfer of an acyl group from acyl-phosphate (acyl-PO(4)) to glycerol-3-phosphate (G3P) to form lysophosphatidic acid (LPA). This enzyme utilizes acyl-phosphate as fatty acyl donor, but not acyl-CoA or acyl-ACP. This Novosphingobium aromaticivorans (strain ATCC 700278 / DSM 12444 / CCUG 56034 / CIP 105152 / NBRC 16084 / F199) protein is Glycerol-3-phosphate acyltransferase.